The following is a 1085-amino-acid chain: MALHLHRAERTDLLADGLAALLSDPLPDPFATELVLVPAKGVERWLSQRLSNRLGVCAAVEFRNPRSLIAELTGTADDDPWSPDAMVWPLLGVIDESLDEPWCATLATHLGHFEMGEEYELRQGRRYAVARRLAGLFASYARQRPQLLVDWDGLPDDLAWQKALWQALCERIDADPPHIRHAKTLVQLHESPTDLPQRLSLFGHTRLPATEVELLTALATHHDLHLWLPHPSDTLWQALSTRKGPLPRREDTSHRDVGHPLLATLGRDLREMQRLLPEPDTDEFRGRSEYPDTLLGWLQSDIAADAVRPQGRHHRREDRSIQVHSCHGPSRQIDVLREVLLGLLADDPTLEPRDILVMCPDIETYAPLITAGFGLGDVVPRTRGAHINLSAHPAHKLRVRLADRALVQTNPLLAVAAQLLALAGGRATASEVLNLAESAPVRARFGFTDDDLDAITAWTREANIRWGFDQEHRRPYGVEFLHNTWRFGIDRVLAGVAMSDDSHAWLGTTLPLDDVSSNRVELAGRFADFVEKLRRTVDQLSGTRPLHEWLDALTAGIDALALADEDWPAAQMQREFAEITARAGDTATSLRLADVRALLDRHLAGRPTRANFRTGTLTVCTMVPMRSVPHRVVCLVGLDDGVFPRLGAVDGDDALARDPMTGERDIRSEDRQLLLDAILAATQTLVITYTGANEYSGQARPPAVPLAELIDTLKITTEDSALDVLTRHPLQPFDKRNVIPGALVPDEPFTFDQTALVAARASSGERAMRPAFFSDPLPPPLPDDVALEDLLNFFKDPVKGFFRALDYTLPWDVEGVSDVMPVDIDALEEWTVGDRMLSDILRGMTPAAAQQAEWRRGTLPPGQLGWRRAIALRDQCALLAAEALGFRDTDGQAYDVDIDLGGGRRLTGTVSPVFGDRLVSVTYSKLGGKHLLQSWIPLLALAAGYPDRDWLAVCIGRPARGTTPRVEGLGGPDNPVDLLADLVAIYDAGRREPLPLPVKTSYAWAEARHCGDDPEQKAGFRWRSGRYPGEDAEPAHVRAWGRDAWLRDLMQPLRPGEEFEGETHRLGAYSSRLWLPLLRAERPVR.

It belongs to the RecC family. In terms of assembly, heterotrimer of RecB, RecC and RecD. All subunits contribute to DNA-binding.

Its function is as follows. A helicase/nuclease that prepares dsDNA breaks (DSB) for recombinational DNA repair. Binds to DSBs and unwinds DNA via a highly rapid and processive ATP-dependent bidirectional helicase activity. Holoenzyme degrades any linearized DNA that is unable to undergo homologous recombination. In the holoenzyme this subunit recognizes the wild-type Chi sequence, and when added to isolated RecB increases its ATP-dependent helicase processivity. Unlike the case in E.coli, suppresses RecA-dependent homologous recombination, is instead required for single-strand annealing pathway repair of DSB. The chain is RecBCD enzyme subunit RecC from Mycolicibacterium smegmatis (strain ATCC 700084 / mc(2)155) (Mycobacterium smegmatis).